Here is a 95-residue protein sequence, read N- to C-terminus: Ribonuclease kappa-B (95 aa).

2 helical membrane passes run 12–32 (GLIISVWGIIQLVLMGLFFYI) and 68–88 (CWIAACIYVLTLLLSAQQFYV).

This sequence belongs to the RNase K family.

The protein resides in the membrane. Its activity is regulated as follows. Inhibited by Zn(2+) and Hg(2+), while it is unaffected by Ca(2+). Functionally, endoribonuclease which displays activity against poly(C) and poly(U) synthetic substrates, as well as rRNA. This Ceratitis capitata (Mediterranean fruit fly) protein is Ribonuclease kappa-B.